The sequence spans 139 residues: Deoxyuridine 5'-triphosphate nucleotidohydrolase (139 aa).

Residues 58–60 (RSG), N71, 75–77 (LID), and M85 contribute to the substrate site.

The protein belongs to the dUTPase family. Mg(2+) is required as a cofactor.

It carries out the reaction dUTP + H2O = dUMP + diphosphate + H(+). Its pathway is pyrimidine metabolism; dUMP biosynthesis; dUMP from dCTP (dUTP route): step 2/2. Functionally, this enzyme is involved in nucleotide metabolism: it produces dUMP, the immediate precursor of thymidine nucleotides and it decreases the intracellular concentration of dUTP so that uracil cannot be incorporated into DNA. The polypeptide is Deoxyuridine 5'-triphosphate nucleotidohydrolase (Gamma-proteobacterium EBAC31A08).